A 378-amino-acid polypeptide reads, in one-letter code: Chorismate synthase (378 aa).

Positions 48 and 54 each coordinate NADP(+). Residues 125–127 (RSS), 238–239 (NA), Gly-278, 293–297 (KPTSS), and Arg-319 contribute to the FMN site.

This sequence belongs to the chorismate synthase family. Homotetramer. The cofactor is FMNH2.

It catalyses the reaction 5-O-(1-carboxyvinyl)-3-phosphoshikimate = chorismate + phosphate. The protein operates within metabolic intermediate biosynthesis; chorismate biosynthesis; chorismate from D-erythrose 4-phosphate and phosphoenolpyruvate: step 7/7. Catalyzes the anti-1,4-elimination of the C-3 phosphate and the C-6 proR hydrogen from 5-enolpyruvylshikimate-3-phosphate (EPSP) to yield chorismate, which is the branch point compound that serves as the starting substrate for the three terminal pathways of aromatic amino acid biosynthesis. This reaction introduces a second double bond into the aromatic ring system. The protein is Chorismate synthase of Azoarcus sp. (strain BH72).